Reading from the N-terminus, the 313-residue chain is NAD-capped RNA hydrolase NudC (313 aa).

Arginine 111 provides a ligand contact to substrate. The Nudix hydrolase domain occupies 168–293; that stretch reads PRIDPAVICL…DWSSASESKL (126 aa). A divalent metal cation contacts are provided by alanine 202, glutamate 218, and glutamate 222. Residues 203–224 carry the Nudix box motif; the sequence is GFVEAGESFEVCVAREIREEIG. 236–243 is a binding site for substrate; that stretch reads QPWPFPRS. Glutamate 264 provides a ligand contact to a divalent metal cation.

The protein belongs to the Nudix hydrolase family. NudC subfamily. Homodimer. It depends on Mg(2+) as a cofactor. The cofactor is Mn(2+).

It carries out the reaction a 5'-end NAD(+)-phospho-ribonucleoside in mRNA + H2O = a 5'-end phospho-adenosine-phospho-ribonucleoside in mRNA + beta-nicotinamide D-ribonucleotide + 2 H(+). The enzyme catalyses NAD(+) + H2O = beta-nicotinamide D-ribonucleotide + AMP + 2 H(+). It catalyses the reaction NADH + H2O = reduced beta-nicotinamide D-ribonucleotide + AMP + 2 H(+). MRNA decapping enzyme that specifically removes the nicotinamide adenine dinucleotide (NAD) cap from a subset of mRNAs by hydrolyzing the diphosphate linkage to produce nicotinamide mononucleotide (NMN) and 5' monophosphate mRNA. The NAD-cap is present at the 5'-end of some mRNAs and stabilizes RNA against 5'-processing. Has preference for mRNAs with a 5'-end purine. Catalyzes the hydrolysis of a broad range of dinucleotide pyrophosphates. The sequence is that of NAD-capped RNA hydrolase NudC from Mycobacterium bovis (strain ATCC BAA-935 / AF2122/97).